We begin with the raw amino-acid sequence, 40 residues long: Hemoglobin subunit alpha-2 (40 aa).

Residues 1 to 40 (VGPHLDDYGGEALHRNFEVYPQTKTYFPHFDASAGSNQLK) form the Globin domain.

The protein belongs to the globin family. Heterotetramer of two alpha chains and two beta chains. As to expression, red blood cells.

In terms of biological role, involved in oxygen transport from the lung to the various peripheral tissues. This is Hemoglobin subunit alpha-2 from Saara hardwickii (Indian spiny-tailed lizard).